We begin with the raw amino-acid sequence, 141 residues long: Hemoglobin subunit alpha-2 (141 aa).

Ser1 bears the N-acetylserine mark. A Globin domain is found at 1 to 141 (SLSTKDKETV…LARALSEKYR (141 aa)). O2 is bound at residue His59. His88 serves as a coordination point for heme b.

It belongs to the globin family. Hb2 is a heterotetramer of two alpha-2 chains and two beta chains. As to expression, red blood cells.

Its function is as follows. Involved in oxygen transport from gills to the various peripheral tissues. The protein is Hemoglobin subunit alpha-2 (hba2) of Notothenia angustata (Rockcod).